A 243-amino-acid polypeptide reads, in one-letter code: Variant surface antigen E (243 aa).

Positions 1-29 (MKKSIFSKKLLVSFGSLVTLAAIPLIAIS) are cleaved as a signal peptide. The N-palmitoyl cysteine moiety is linked to residue Cys-30. Cys-30 is lipidated: S-diacylglycerol cysteine. Residues 34–243 (TDNLSQSQQP…TTSDGQNQNK (210 aa)) form a disordered region. The segment covering 52–92 (GTNTENGSNNGSGSGTTNSSGGTNQSGSASGNGSSNSSVST) has biased composition (low complexity). Residues 93–243 (PDGQHSNPSN…TTSDGQNQNK (151 aa)) are compositionally biased toward polar residues. 11 tandem repeats follow at residues 97-109 (HSNP…SDPK), 110-122 (ESNP…SDPK), 123-135 (ESNP…SDGQ), 136-148 (HSNP…SDPK), 149-161 (ESNP…SDGQ), 162-174 (HSNP…SDGQ), 175-187 (HSNP…SDGQ), 188-200 (HSNP…SDGQ), 201-213 (HSNP…SDGQ), 214-226 (HSNP…SDGQ), and 227-239 (HSNP…SDGQ). Residues 97-239 (HSNPSNPTTS…PSNPTTSDGQ (143 aa)) are 11 X 13 AA tandem repeats.

The protein resides in the cell membrane. Responsible for the antigenic diversity for host adaptation. Expression in E.coli of a construct containing vlpD, vlpE, and vlpF yields antigenically distinguishable products corresponding to each gene. This is Variant surface antigen E (vlpE) from Mesomycoplasma hyorhinis (Mycoplasma hyorhinis).